The primary structure comprises 116 residues: Large ribosomal subunit protein bL17 (116 aa).

The protein belongs to the bacterial ribosomal protein bL17 family. In terms of assembly, part of the 50S ribosomal subunit. Contacts protein L32.

The chain is Large ribosomal subunit protein bL17 from Sulfurimonas denitrificans (strain ATCC 33889 / DSM 1251) (Thiomicrospira denitrificans (strain ATCC 33889 / DSM 1251)).